The sequence spans 449 residues: METTSEKQGRILLVDDESAILRTFRYCLEDEGYSVATASSAPQAEALLQRQVFDLCFLDLRLGEDNGLDVLAQMRVQAPWMRVVIVTAHSAVDTAVDAMQAGAVDYLVKPCSPDQLRLAAAKQLEVRQLTARLEALEDEVRRQGDGLESHSPAMAAVLETARQVAATDANILILGESGSGKGELARAIHTWSKRAKKPQVTINCPSLTAELMESELFGHSRGAFTGATESTLGRVSQADGGTLFLDEIGDFPLTLQPKLLRFIQDKEYERVGDPVTRRADVRILAATNRDLGAMVAQGQFREDLLYRLNVIVLNLPPLRERAEDILGLAERFLARFVKDYGRPARGFSEAAREAMRQYPWPGNVRELRNVIERASIICNQELVDVDHLGFSAAQSASSAPRIGESLSLEDLEKAHITAVMASSATLDQAAKTLGIDASTLYRKRKQYGL.

The Response regulatory domain occupies 10 to 124 (RILLVDDESA…QLRLAAAKQL (115 aa)). At D59 the chain carries 4-aspartylphosphate. The Sigma-54 factor interaction domain maps to 147–376 (LESHSPAMAA…LRNVIERASI (230 aa)). ATP is bound by residues 175-182 (GESGSGKG) and 238-247 (ADGGTLFLDE). The H-T-H motif DNA-binding region spans 426 to 445 (LDQAAKTLGIDASTLYRKRK).

Phosphorylated by KinB.

It functions in the pathway glycan biosynthesis; alginate biosynthesis [regulation]. Member of the two-component regulatory system AlgB/KinB involved in regulation of alginate biosynthesis genes. Positive regulator of the alginate biosynthetic gene AlgD. This is Alginate biosynthesis transcriptional regulatory protein AlgB (algB) from Pseudomonas aeruginosa (strain ATCC 15692 / DSM 22644 / CIP 104116 / JCM 14847 / LMG 12228 / 1C / PRS 101 / PAO1).